Consider the following 390-residue polypeptide: GDSL esterase/lipase At1g28640 (390 aa).

The first 26 residues, 1–26, serve as a signal peptide directing secretion; sequence MASSLEKLISSFLLVLYSTTIIVASS. The Nucleophile role is filled by serine 42. Asparagine 105, asparagine 138, and asparagine 321 each carry an N-linked (GlcNAc...) asparagine glycan. Residues aspartate 346 and histidine 349 contribute to the active site. A glycan (N-linked (GlcNAc...) asparagine) is linked at asparagine 364.

It belongs to the 'GDSL' lipolytic enzyme family.

It is found in the secreted. The chain is GDSL esterase/lipase At1g28640 from Arabidopsis thaliana (Mouse-ear cress).